The primary structure comprises 246 residues: UDP-N-acetyl-D-mannosaminuronic acid transferase (246 aa).

The protein belongs to the glycosyltransferase 26 family.

It catalyses the reaction UDP-N-acetyl-alpha-D-mannosaminouronate + N-acetyl-alpha-D-glucosaminyl-di-trans,octa-cis-undecaprenyl diphosphate = beta-D-ManNAcA-(1-&gt;4)-alpha-D-GlcNAc-di-trans,octa-cis-undecaprenyl diphosphate + UDP + H(+). Its pathway is bacterial outer membrane biogenesis; enterobacterial common antigen biosynthesis. Catalyzes the synthesis of Und-PP-GlcNAc-ManNAcA (Lipid II), the second lipid-linked intermediate involved in enterobacterial common antigen (ECA) synthesis. The chain is UDP-N-acetyl-D-mannosaminuronic acid transferase from Salmonella choleraesuis (strain SC-B67).